A 348-amino-acid chain; its full sequence is Serpentine receptor class alpha-29 (348 aa).

6 helical membrane-spanning segments follow: residues Phe28–Trp48, Phe108–Phe130, Gly145–Phe165, Ile193–Ile213, Cys246–Phe266, and Leu280–Ile300.

This sequence belongs to the nematode receptor-like protein sra family.

It localises to the membrane. This Caenorhabditis elegans protein is Serpentine receptor class alpha-29 (sra-29).